We begin with the raw amino-acid sequence, 303 residues long: tRNA dimethylallyltransferase (303 aa).

Residue 9–16 (GPTASGKS) participates in ATP binding. 11–16 (TASGKS) contributes to the substrate binding site. Residues 34 to 37 (DSKQ) are interaction with substrate tRNA.

The protein belongs to the IPP transferase family. Monomer. Mg(2+) serves as cofactor.

The catalysed reaction is adenosine(37) in tRNA + dimethylallyl diphosphate = N(6)-dimethylallyladenosine(37) in tRNA + diphosphate. Its function is as follows. Catalyzes the transfer of a dimethylallyl group onto the adenine at position 37 in tRNAs that read codons beginning with uridine, leading to the formation of N6-(dimethylallyl)adenosine (i(6)A). This Ehrlichia chaffeensis (strain ATCC CRL-10679 / Arkansas) protein is tRNA dimethylallyltransferase.